Consider the following 31-residue polypeptide: Phalloidin proprotein (31 aa).

A propeptide spanning residues 1-10 (MSDINATRLP) is cleaved from the precursor. A cross-link (cyclopeptide (Ala-Pro)) is located at residues 11 to 17 (AWLATCP). Residues 12 to 16 (WLATC) constitute a cross-link (2'-cysteinyl-6'-hydroxytryptophan sulfoxide (Trp-Cys)). A propeptide spanning residues 18–31 (CAGDDVNPLLTRGE) is cleaved from the precursor.

The protein belongs to the MSDIN fungal toxin family. Processed by the macrocyclase-peptidase enzyme POPB to yield a toxic cyclic heptapeptide. POPB first removes 10 residues from the N-terminus. Conformational trapping of the remaining peptide forces the enzyme to release this intermediate rather than proceed to macrocyclization. The enzyme rebinds the remaining peptide in a different conformation and catalyzes macrocyclization of the N-terminal 7 residues.

Its function is as follows. Major toxin that belongs to the bicyclic heptapeptides called phallotoxins. Although structurally related to amatoxins, phallotoxins have a different mode of action, which is the stabilization of F-actin. Phallotoxins are poisonous when administered parenterally, but not orally because of poor absorption. This chain is Phalloidin proprotein, found in Amanita ocreata (Western North American destroying angel).